The primary structure comprises 322 residues: Ribosomal RNA small subunit methyltransferase H (322 aa).

S-adenosyl-L-methionine is bound by residues glycine 34–histidine 36, aspartate 59, phenylalanine 86, aspartate 112, and glutamine 119.

The protein belongs to the methyltransferase superfamily. RsmH family.

The protein resides in the cytoplasm. The enzyme catalyses cytidine(1402) in 16S rRNA + S-adenosyl-L-methionine = N(4)-methylcytidine(1402) in 16S rRNA + S-adenosyl-L-homocysteine + H(+). Functionally, specifically methylates the N4 position of cytidine in position 1402 (C1402) of 16S rRNA. This Chlorobium limicola (strain DSM 245 / NBRC 103803 / 6330) protein is Ribosomal RNA small subunit methyltransferase H.